We begin with the raw amino-acid sequence, 375 residues long: Probable RNA 3'-terminal phosphate cyclase-like protein (375 aa).

This sequence belongs to the RNA 3'-terminal cyclase family. Type 2 subfamily.

The protein localises to the nucleus. It is found in the nucleolus. Does not have cyclase activity. Plays a role in 40S-ribosomal-subunit biogenesis in the early pre-rRNA processing steps at sites A0, A1 and A2 that are required for proper maturation of the 18S RNA. This Arabidopsis thaliana (Mouse-ear cress) protein is Probable RNA 3'-terminal phosphate cyclase-like protein.